Reading from the N-terminus, the 458-residue chain is Photosystem II CP43 reaction center protein (458 aa).

The next 5 membrane-spanning stretches (helical) occupy residues 54-78, 119-140, 163-185, 240-260, and 276-297; these read LFEV…PHLA, LRGP…KDKN, KAMF…RVIT, RPFN…LSYS, and WFNN…ASQA. A [CaMn4O5] cluster-binding site is contributed by Glu-352. The chain crosses the membrane as a helical span at residues 432 to 456; sequence RARAAAAGFEKGIDRKTEPVLSMSD.

This sequence belongs to the PsbB/PsbC family. PsbC subfamily. PSII is composed of 1 copy each of membrane proteins PsbA, PsbB, PsbC, PsbD, PsbE, PsbF, PsbH, PsbI, PsbJ, PsbK, PsbL, PsbM, PsbT, PsbX, PsbY, PsbZ, Psb30/Ycf12, peripheral proteins PsbO, CyanoQ (PsbQ), PsbU, PsbV and a large number of cofactors. It forms dimeric complexes. The cofactor is Binds multiple chlorophylls and provides some of the ligands for the Ca-4Mn-5O cluster of the oxygen-evolving complex. It may also provide a ligand for a Cl- that is required for oxygen evolution. PSII binds additional chlorophylls, carotenoids and specific lipids..

It localises to the cellular thylakoid membrane. In terms of biological role, one of the components of the core complex of photosystem II (PSII). It binds chlorophyll and helps catalyze the primary light-induced photochemical processes of PSII. PSII is a light-driven water:plastoquinone oxidoreductase, using light energy to abstract electrons from H(2)O, generating O(2) and a proton gradient subsequently used for ATP formation. This chain is Photosystem II CP43 reaction center protein, found in Prochlorothrix hollandica.